A 301-amino-acid polypeptide reads, in one-letter code: tRNA dimethylallyltransferase (301 aa).

Residue 8–15 (GATGTGKS) coordinates ATP. 10–15 (TGTGKS) is a binding site for substrate. Residues 33–36 (DSMQ) are interaction with substrate tRNA.

This sequence belongs to the IPP transferase family. Monomer. The cofactor is Mg(2+).

It catalyses the reaction adenosine(37) in tRNA + dimethylallyl diphosphate = N(6)-dimethylallyladenosine(37) in tRNA + diphosphate. In terms of biological role, catalyzes the transfer of a dimethylallyl group onto the adenine at position 37 in tRNAs that read codons beginning with uridine, leading to the formation of N6-(dimethylallyl)adenosine (i(6)A). This is tRNA dimethylallyltransferase from Tropheryma whipplei (strain Twist) (Whipple's bacillus).